The primary structure comprises 684 residues: Kinesin-like protein KIN-13B (684 aa).

2 disordered regions span residues 1 to 31 and 71 to 103; these read MSGRQRSVAAAVHHQRQLSDNPLDMSSSNGR and GNEFFGEPTTPQYGARPTNQRKNNDESEFSPGL. Polar residues-rich tracts occupy residues 18–31 and 79–91; these read LSDNPLDMSSSNGR and TTPQYGARPTNQR. The region spanning 169 to 492 is the Kinesin motor domain; the sequence is KIKVVVRKRP…LRYADRVKSL (324 aa). 258–265 is an ATP binding site; sequence GQTGSGKT. The segment at 574–594 is disordered; sequence KPTIQMKSRDMPRPDMKKSNS. Over residues 580 to 594 the composition is skewed to basic and acidic residues; sequence KSRDMPRPDMKKSNS. Residues 596-626 adopt a coiled-coil conformation; sequence DNLNALLQEEEDLVNAHRKQVEDTMNIVKEE.

The protein belongs to the TRAFAC class myosin-kinesin ATPase superfamily. Kinesin family. KIN-13 subfamily.

In terms of biological role, acts redundantly with KIN13A to modulate cell wall synthesis and cell expansion via the THE1 pathway. The polypeptide is Kinesin-like protein KIN-13B (Arabidopsis thaliana (Mouse-ear cress)).